Here is a 285-residue protein sequence, read N- to C-terminus: Bifunctional protein FolD (285 aa).

NADP(+) is bound by residues 169 to 171 (GRS), Ser194, and Ile235.

The protein belongs to the tetrahydrofolate dehydrogenase/cyclohydrolase family. In terms of assembly, homodimer.

The catalysed reaction is (6R)-5,10-methylene-5,6,7,8-tetrahydrofolate + NADP(+) = (6R)-5,10-methenyltetrahydrofolate + NADPH. It catalyses the reaction (6R)-5,10-methenyltetrahydrofolate + H2O = (6R)-10-formyltetrahydrofolate + H(+). The protein operates within one-carbon metabolism; tetrahydrofolate interconversion. In terms of biological role, catalyzes the oxidation of 5,10-methylenetetrahydrofolate to 5,10-methenyltetrahydrofolate and then the hydrolysis of 5,10-methenyltetrahydrofolate to 10-formyltetrahydrofolate. The sequence is that of Bifunctional protein FolD from Microcystis aeruginosa (strain NIES-843 / IAM M-2473).